Reading from the N-terminus, the 48-residue chain is Small, acid-soluble spore protein G (48 aa).

Residues 1 to 16 (MSENRHENEENRRDAA) show a composition bias toward basic and acidic residues. Residues 1–48 (MSENRHENEENRRDAAVAKVQNSGNAKVVVSVNTDQDQAQAQSQDGED) form a disordered region. The span at 35–48 (DQDQAQAQSQDGED) shows a compositional bias: low complexity.

In Bacillus subtilis (strain 168), this protein is Small, acid-soluble spore protein G (sspG).